The following is a 387-amino-acid chain: Succinate--CoA ligase [ADP-forming] subunit beta (387 aa).

An ATP-grasp domain is found at K9 to K245. ATP is bound by residues K46, G53 to G55, E100, Y103, and E108. Residues N200 and D214 each contribute to the Mg(2+) site. Residues N265 and G322 to V324 each bind substrate.

Belongs to the succinate/malate CoA ligase beta subunit family. In terms of assembly, heterotetramer of two alpha and two beta subunits. Mg(2+) is required as a cofactor.

The catalysed reaction is succinate + ATP + CoA = succinyl-CoA + ADP + phosphate. It carries out the reaction GTP + succinate + CoA = succinyl-CoA + GDP + phosphate. Its pathway is carbohydrate metabolism; tricarboxylic acid cycle; succinate from succinyl-CoA (ligase route): step 1/1. Succinyl-CoA synthetase functions in the citric acid cycle (TCA), coupling the hydrolysis of succinyl-CoA to the synthesis of either ATP or GTP and thus represents the only step of substrate-level phosphorylation in the TCA. The beta subunit provides nucleotide specificity of the enzyme and binds the substrate succinate, while the binding sites for coenzyme A and phosphate are found in the alpha subunit. The chain is Succinate--CoA ligase [ADP-forming] subunit beta from Francisella tularensis subsp. tularensis (strain WY96-3418).